A 288-amino-acid chain; its full sequence is 4-hydroxy-3-methylbut-2-enyl diphosphate reductase (288 aa).

Cys12 provides a ligand contact to [4Fe-4S] cluster. (2E)-4-hydroxy-3-methylbut-2-enyl diphosphate is bound by residues His42 and His77. His42 and His77 together coordinate dimethylallyl diphosphate. Residues His42 and His77 each contribute to the isopentenyl diphosphate site. Cys99 contributes to the [4Fe-4S] cluster binding site. His127 serves as a coordination point for (2E)-4-hydroxy-3-methylbut-2-enyl diphosphate. Residue His127 coordinates dimethylallyl diphosphate. An isopentenyl diphosphate-binding site is contributed by His127. Glu129 acts as the Proton donor in catalysis. Residue Thr165 participates in (2E)-4-hydroxy-3-methylbut-2-enyl diphosphate binding. Residue Cys193 coordinates [4Fe-4S] cluster. Residues Ser221, Ser222, Asn223, and Ser265 each coordinate (2E)-4-hydroxy-3-methylbut-2-enyl diphosphate. Ser221, Ser222, Asn223, and Ser265 together coordinate dimethylallyl diphosphate. Residues Ser221, Ser222, Asn223, and Ser265 each contribute to the isopentenyl diphosphate site.

Belongs to the IspH family. [4Fe-4S] cluster is required as a cofactor.

The catalysed reaction is isopentenyl diphosphate + 2 oxidized [2Fe-2S]-[ferredoxin] + H2O = (2E)-4-hydroxy-3-methylbut-2-enyl diphosphate + 2 reduced [2Fe-2S]-[ferredoxin] + 2 H(+). It catalyses the reaction dimethylallyl diphosphate + 2 oxidized [2Fe-2S]-[ferredoxin] + H2O = (2E)-4-hydroxy-3-methylbut-2-enyl diphosphate + 2 reduced [2Fe-2S]-[ferredoxin] + 2 H(+). The protein operates within isoprenoid biosynthesis; dimethylallyl diphosphate biosynthesis; dimethylallyl diphosphate from (2E)-4-hydroxy-3-methylbutenyl diphosphate: step 1/1. It participates in isoprenoid biosynthesis; isopentenyl diphosphate biosynthesis via DXP pathway; isopentenyl diphosphate from 1-deoxy-D-xylulose 5-phosphate: step 6/6. Functionally, catalyzes the conversion of 1-hydroxy-2-methyl-2-(E)-butenyl 4-diphosphate (HMBPP) into a mixture of isopentenyl diphosphate (IPP) and dimethylallyl diphosphate (DMAPP). Acts in the terminal step of the DOXP/MEP pathway for isoprenoid precursor biosynthesis. The protein is 4-hydroxy-3-methylbut-2-enyl diphosphate reductase of Caldanaerobacter subterraneus subsp. tengcongensis (strain DSM 15242 / JCM 11007 / NBRC 100824 / MB4) (Thermoanaerobacter tengcongensis).